The chain runs to 298 residues: Bifunctional protein FolD (298 aa).

Residues 165–167 (GRS), serine 190, and isoleucine 231 each bind NADP(+).

This sequence belongs to the tetrahydrofolate dehydrogenase/cyclohydrolase family. In terms of assembly, homodimer.

It carries out the reaction (6R)-5,10-methylene-5,6,7,8-tetrahydrofolate + NADP(+) = (6R)-5,10-methenyltetrahydrofolate + NADPH. The enzyme catalyses (6R)-5,10-methenyltetrahydrofolate + H2O = (6R)-10-formyltetrahydrofolate + H(+). Its pathway is one-carbon metabolism; tetrahydrofolate interconversion. In terms of biological role, catalyzes the oxidation of 5,10-methylenetetrahydrofolate to 5,10-methenyltetrahydrofolate and then the hydrolysis of 5,10-methenyltetrahydrofolate to 10-formyltetrahydrofolate. This is Bifunctional protein FolD from Prochlorococcus marinus subsp. pastoris (strain CCMP1986 / NIES-2087 / MED4).